The sequence spans 719 residues: Catalase-3 (719 aa).

An N-terminal signal peptide occupies residues 1-18 (MRVNALLPLSGLIGTALA). Positions 19 to 30 (ACPFADPSALGR) are excised as a propeptide. Residues His-102 and Asn-175 contribute to the active site. Tyr-389 serves as a coordination point for heme.

This sequence belongs to the catalase family. Heme is required as a cofactor.

It carries out the reaction 2 H2O2 = O2 + 2 H2O. Occurs in almost all aerobically respiring organisms and serves to protect cells from the toxic effects of hydrogen peroxide. This chain is Catalase-3 (cat-3), found in Neurospora crassa (strain ATCC 24698 / 74-OR23-1A / CBS 708.71 / DSM 1257 / FGSC 987).